The chain runs to 324 residues: NADH-ubiquinone oxidoreductase chain 1 (324 aa).

8 consecutive transmembrane segments (helical) span residues 9–29 (LTMALSYAVPILIAVAFLTLV), 75–95 (ILFIATPILALLLAITIWIPL), 106–126 (LGLLFLLSMSSLAVYSILWSG), 142–162 (VAQTISYEVTLAIILLSVIML), 177–197 (PLYLIFSTWPLAMMWYISTLA), 228–248 (LFFLAEYANIMLMNTLTAILF), 259–279 (ELFPLILATKTLLLSSGFLWV), and 300–320 (LPLTLALCLWHTSLPISYAGI).

Belongs to the complex I subunit 1 family.

Its subcellular location is the mitochondrion inner membrane. It carries out the reaction a ubiquinone + NADH + 5 H(+)(in) = a ubiquinol + NAD(+) + 4 H(+)(out). Functionally, core subunit of the mitochondrial membrane respiratory chain NADH dehydrogenase (Complex I) that is believed to belong to the minimal assembly required for catalysis. Complex I functions in the transfer of electrons from NADH to the respiratory chain. The immediate electron acceptor for the enzyme is believed to be ubiquinone. The protein is NADH-ubiquinone oxidoreductase chain 1 (MT-ND1) of Struthio camelus (Common ostrich).